The chain runs to 238 residues: Sugar fermentation stimulation protein homolog (238 aa).

It belongs to the SfsA family.

This chain is Sugar fermentation stimulation protein homolog, found in Histophilus somni (strain 2336) (Haemophilus somnus).